A 775-amino-acid chain; its full sequence is DNA polymerase (775 aa).

It belongs to the DNA polymerase type-B family. As to quaternary structure, monomer.

It carries out the reaction DNA(n) + a 2'-deoxyribonucleoside 5'-triphosphate = DNA(n+1) + diphosphate. With respect to regulation, an 11-mer corresponding to the PIP-box of RfcL inhibits DNA synthesis. In addition to polymerase activity, this DNA polymerase exhibits 3' to 5' exonuclease activity. The protein is DNA polymerase (pol) of Pyrococcus furiosus (strain ATCC 43587 / DSM 3638 / JCM 8422 / Vc1).